The sequence spans 216 residues: Large ribosomal subunit protein eL15 (216 aa).

Belongs to the eukaryotic ribosomal protein eL15 family.

The sequence is that of Large ribosomal subunit protein eL15 from Metallosphaera sedula (strain ATCC 51363 / DSM 5348 / JCM 9185 / NBRC 15509 / TH2).